A 134-amino-acid chain; its full sequence is Putative protein KRIP1 (134 aa).

The disordered stretch occupies residues 1–134 (MSPVHRSRTS…PDPALPLQML (134 aa)). 3 stretches are compositionally biased toward polar residues: residues 9 to 24 (TSQT…TLSF), 43 to 55 (SQPN…SHVS), and 64 to 79 (CSQS…TNPN). Residues 119-128 (PAKPALPDPA) show a composition bias toward pro residues.

Abundant expression is found in prostate, restricted to cells of epithelial origin in normal and diseased glands. Very low expression is detected in pancreas and ovary.

The protein resides in the cytoplasm. Its subcellular location is the nucleus. This is Putative protein KRIP1 (KLKP1) from Homo sapiens (Human).